A 43-amino-acid chain; its full sequence is Defensin (43 aa).

Disulfide bonds link Cys-3–Cys-34, Cys-20–Cys-39, and Cys-24–Cys-41.

Its subcellular location is the secreted. Its function is as follows. Antibacterial peptide active against Gram-positive and Gram-negative bacteria. The polypeptide is Defensin (Palomena prasina (Green shield bug)).